The chain runs to 179 residues: Large ribosomal subunit protein uL6 (179 aa).

The protein belongs to the universal ribosomal protein uL6 family. In terms of assembly, part of the 50S ribosomal subunit.

Its function is as follows. This protein binds to the 23S rRNA, and is important in its secondary structure. It is located near the subunit interface in the base of the L7/L12 stalk, and near the tRNA binding site of the peptidyltransferase center. This is Large ribosomal subunit protein uL6 from Fructilactobacillus sanfranciscensis (Lactobacillus sanfranciscensis).